The primary structure comprises 131 residues: Maturin (131 aa).

Tyr-34 carries the post-translational modification Phosphotyrosine. Over residues Phe-107 to Glu-120 the composition is skewed to acidic residues. The interval Phe-107–Gln-131 is disordered.

It belongs to the MTURN family. Phosphorylation at Tyr-34 is essential for its ability to promote megakaryocyte differentiation.

It localises to the cytoplasm. Its function is as follows. Promotes megakaryocyte differentiation by enhancing ERK and JNK signaling as well as up-regulating RUNX1 and FLI1 expression. Represses NF-kappa-B transcriptional activity by inhibiting phosphorylation of RELA at 'Ser- 536'. May be involved in early neuronal development. This Bos taurus (Bovine) protein is Maturin (MTURN).